A 962-amino-acid polypeptide reads, in one-letter code: Phenylalanine--tRNA ligase beta subunit (962 aa).

A tRNA-binding domain is found at 85 to 201; the sequence is TIRWCKVRVC…AEVFQGDELS (117 aa). One can recognise a B5 domain in the interval 456–538; sequence TQQSPILLST…RVIGFNRIPS (83 aa). The Mg(2+) site is built by Asp-516, Asp-522, Glu-525, and Glu-526. The interval 621–675 is insert; it reads PDSTHNPDSGSDPIIPTGVTRITEPGSSGVSGPGNVGVKEKCSADTSIEHAPTTR. One can recognise an FDX-ACB domain in the interval 870 to 961; it reads PTSPAATQHL…ASSKFGAIMR (92 aa).

Belongs to the phenylalanyl-tRNA synthetase beta subunit family. Type 1 subfamily. Tetramer of two alpha and two beta subunits. Requires Mg(2+) as cofactor.

The protein resides in the cytoplasm. The enzyme catalyses tRNA(Phe) + L-phenylalanine + ATP = L-phenylalanyl-tRNA(Phe) + AMP + diphosphate + H(+). This Tropheryma whipplei (strain Twist) (Whipple's bacillus) protein is Phenylalanine--tRNA ligase beta subunit.